A 113-amino-acid polypeptide reads, in one-letter code: Putative pterin-4-alpha-carbinolamine dehydratase (113 aa).

This sequence belongs to the pterin-4-alpha-carbinolamine dehydratase family.

The catalysed reaction is (4aS,6R)-4a-hydroxy-L-erythro-5,6,7,8-tetrahydrobiopterin = (6R)-L-erythro-6,7-dihydrobiopterin + H2O. The polypeptide is Putative pterin-4-alpha-carbinolamine dehydratase (Hydrogenovibrio crunogenus (strain DSM 25203 / XCL-2) (Thiomicrospira crunogena)).